Consider the following 388-residue polypeptide: Succinate--CoA ligase [ADP-forming] subunit beta (388 aa).

The ATP-grasp domain occupies 9–244 (KQLFARYGLP…QSQEDPREAQ (236 aa)). Residues lysine 46, 53–55 (GRG), glutamate 99, threonine 102, and glutamate 107 each bind ATP. Residues asparagine 199 and aspartate 213 each coordinate Mg(2+). Substrate is bound by residues asparagine 264 and 321–323 (GIV).

The protein belongs to the succinate/malate CoA ligase beta subunit family. In terms of assembly, heterotetramer of two alpha and two beta subunits. The cofactor is Mg(2+).

The catalysed reaction is succinate + ATP + CoA = succinyl-CoA + ADP + phosphate. It catalyses the reaction GTP + succinate + CoA = succinyl-CoA + GDP + phosphate. Its pathway is carbohydrate metabolism; tricarboxylic acid cycle; succinate from succinyl-CoA (ligase route): step 1/1. In terms of biological role, succinyl-CoA synthetase functions in the citric acid cycle (TCA), coupling the hydrolysis of succinyl-CoA to the synthesis of either ATP or GTP and thus represents the only step of substrate-level phosphorylation in the TCA. The beta subunit provides nucleotide specificity of the enzyme and binds the substrate succinate, while the binding sites for coenzyme A and phosphate are found in the alpha subunit. The polypeptide is Succinate--CoA ligase [ADP-forming] subunit beta (Salmonella dublin (strain CT_02021853)).